Consider the following 430-residue polypeptide: Tyrosine--tRNA ligase (430 aa).

An L-tyrosine-binding site is contributed by tyrosine 32. The short motif at proline 37–histidine 46 is the 'HIGH' region element. The L-tyrosine site is built by tyrosine 172 and glutamine 176. Positions lysine 232 to threonine 236 match the 'KMSKS' region motif. Residue lysine 235 participates in ATP binding. Residues isoleucine 362–alanine 429 form the S4 RNA-binding domain.

It belongs to the class-I aminoacyl-tRNA synthetase family. TyrS type 1 subfamily. Homodimer.

It localises to the cytoplasm. It carries out the reaction tRNA(Tyr) + L-tyrosine + ATP = L-tyrosyl-tRNA(Tyr) + AMP + diphosphate + H(+). Functionally, catalyzes the attachment of tyrosine to tRNA(Tyr) in a two-step reaction: tyrosine is first activated by ATP to form Tyr-AMP and then transferred to the acceptor end of tRNA(Tyr). The sequence is that of Tyrosine--tRNA ligase from Parabacteroides distasonis (strain ATCC 8503 / DSM 20701 / CIP 104284 / JCM 5825 / NCTC 11152).